The chain runs to 239 residues: 1-(5-phosphoribosyl)-5-[(5-phosphoribosylamino)methylideneamino] imidazole-4-carboxamide isomerase (239 aa).

The Proton acceptor role is filled by D8. Residue D129 is the Proton donor of the active site.

This sequence belongs to the HisA/HisF family.

The protein resides in the cytoplasm. The enzyme catalyses 1-(5-phospho-beta-D-ribosyl)-5-[(5-phospho-beta-D-ribosylamino)methylideneamino]imidazole-4-carboxamide = 5-[(5-phospho-1-deoxy-D-ribulos-1-ylimino)methylamino]-1-(5-phospho-beta-D-ribosyl)imidazole-4-carboxamide. Its pathway is amino-acid biosynthesis; L-histidine biosynthesis; L-histidine from 5-phospho-alpha-D-ribose 1-diphosphate: step 4/9. The polypeptide is 1-(5-phosphoribosyl)-5-[(5-phosphoribosylamino)methylideneamino] imidazole-4-carboxamide isomerase (Bacillus cereus (strain ZK / E33L)).